Reading from the N-terminus, the 1522-residue chain is Sodium channel protein 1 brain (1522 aa).

Over 1–50 the chain is Cytoplasmic; that stretch reads MDEKYTAKNRDKTFVVIEKRFKKNIIHRFSAKRSLFLFTPRNPIRRLAVC. One copy of the I repeat lies at 41–342; sequence RNPIRRLAVC…VATAYELEVK (302 aa). The chain crosses the membrane as a helical span at residues 51 to 70; it reads IATNVCFDYFLMFTIMINCV. Over 71–77 the chain is Extracellular; sequence FLAMPDI. Residues 78–99 traverse the membrane as a helical segment; that stretch reads SEFAEYIFLGIYTMEMAIKLVA. At 100 to 112 the chain is on the cytoplasmic side; the sequence is GGFFIDKYTYLRD. The chain crosses the membrane as a helical span at residues 113-134; the sequence is AWNCLDFTVIMISYITLLLQTI. Residues 135–143 are Extracellular-facing; the sequence is NDKVISDIT. A helical; Voltage-sensor membrane pass occupies residues 144–167; it reads GLRTFRVLRALRTLSIIPGLKTMV. Over 168–179 the chain is Cytoplasmic; it reads NALLRALRMLIS. A helical membrane pass occupies residues 180–201; it reads VLILILFCLWIFSQAGVQLFGG. Residues 202-278 are Extracellular-facing; that stretch reads ALRHKCVLQI…PNYGYTNFDS (77 aa). C207 and C255 form a disulfide bridge. N248 and N258 each carry an N-linked (GlcNAc...) asparagine glycan. Residues 279-303 constitute an intramembrane region (pore-forming); the sequence is IGWSMLISFQLLTQDYWEDVYNKVI. Residues 304-308 lie on the Extracellular side of the membrane; it reads RAHSP. The chain crosses the membrane as a helical span at residues 309–331; the sequence is WTVIYFIVINFFGSLYLMNLMLA. At 332–406 the chain is on the cytoplasmic side; the sequence is VVATAYELEV…WLRVQSFAHC (75 aa). Residues 393–647 form an II repeat; the sequence is CYNPWLRVQS…EQEVEVSSFA (255 aa). The helical transmembrane segment at 407 to 426 threads the bilayer; that stretch reads IITDSFTEVFIIFIIVLNTV. The Extracellular portion of the chain corresponds to 427-442; it reads FLAMEHHGMSMELKNV. The chain crosses the membrane as a helical span at residues 443-464; sequence LKVANYVFTTVFVLEAILKLLA. Residues 465–472 lie on the Cytoplasmic side of the membrane; that stretch reads FNKQYFKS. A helical transmembrane segment spans residues 473-491; it reads GWNICDLVVVVASLIDLGV. At 492 to 498 the chain is on the extracellular side; sequence EGLKGVS. A helical; Voltage-sensor transmembrane segment spans residues 499-522; that stretch reads VFRSFRLLRVFHLAQSWTTMRLLL. Residues 523 to 531 are Cytoplasmic-facing; it reads CIILNTLGS. The chain crosses the membrane as a helical span at residues 532–553; the sequence is LGYLTIILIIVIYIFAVTGLQL. Topologically, residues 554-575 are extracellular; the sequence is FHTEYTPDKFRGEPVPRWNFND. Residues 576–596 constitute an intramembrane region (pore-forming); the sequence is FLHSFMMVFRILCGEWIEPMY. The Extracellular segment spans residues 597 to 607; sequence DCMRACNGLCF. An intrachain disulfide couples C598 to C606. A helical transmembrane segment spans residues 608–628; that stretch reads LIFIPVTVFGKTLFFLFIGLV. Residues 629-777 lie on the Cytoplasmic side of the membrane; the sequence is LGAFGSDTVE…WNNFRRQLMM (149 aa). Residues 770 to 1074 form an III repeat; the sequence is NFRRQLMMVC…QNYYNTLKKL (305 aa). A helical membrane pass occupies residues 778 to 797; that stretch reads VCENKYFETGVLVIIFASSI. Over 798 to 815 the chain is Extracellular; the sequence is LLAFEDIYLNEKPRLKLA. The chain crosses the membrane as a helical span at residues 816–837; that stretch reads IFYLDITFCLLFFLEMVLKLVA. Residues 838–846 lie on the Cytoplasmic side of the membrane; that stretch reads LGFVHYYTH. The helical transmembrane segment at 847–868 threads the bilayer; sequence FWTILDFTIVIITVISLAASGL. At 869–874 the chain is on the extracellular side; the sequence is GMEQIT. A helical; Voltage-sensor membrane pass occupies residues 875 to 898; sequence AFRSLRTLRALRPLRAVSRWQGMK. Over 899–915 the chain is Cytoplasmic; that stretch reads IIVNALMLSIPSIFNVL. The helical transmembrane segment at 916–937 threads the bilayer; sequence LVCVVFWLIFAIMGVQLFAGKF. Residues 938-976 are Extracellular-facing; that stretch reads YKCVNETNMRIPPTEVANKIECYNKNYTWVNSNVNFDNV. N-linked (GlcNAc...) asparagine glycans are attached at residues N942 and N963. An intramembrane region (pore-forming) is located at residues 977–998; the sequence is GGAFLALFQVATFEGWMEIMAD. At 999-1009 the chain is on the extracellular side; sequence AVDVTEVDEQP. A helical membrane pass occupies residues 1010-1022; sequence KFEATVYYYFYFV. At 1023 to 1100 the chain is on the cytoplasmic side; that stretch reads LFIIFGSFFV…QAVVYDLVMS (78 aa). T1076 carries the post-translational modification Phosphothreonine; by PKC. The IV repeat unit spans residues 1083–1386; it reads VKRPKNKCQA…WEQYDPLATQ (304 aa). A helical membrane pass occupies residues 1101–1120; that stretch reads NQFEIFITTIIITNMIFMAF. The Extracellular segment spans residues 1121–1132; that stretch reads EHYNQSEVVTEV. A glycan (N-linked (GlcNAc...) asparagine) is linked at N1124. A helical membrane pass occupies residues 1133-1154; sequence LATANIAFTILYAVEAIIKIIG. The Cytoplasmic segment spans residues 1155–1162; that stretch reads LRIHYLRN. Residues 1163–1184 traverse the membrane as a helical segment; the sequence is LWNVFDFLVVTLSVMDAFLNDI. Over 1185–1194 the chain is Extracellular; the sequence is FGDGIFMNPS. A helical; Voltage-sensor transmembrane segment spans residues 1195–1218; sequence LLRVARMFRIGRIIRLIKWAKGMR. The Cytoplasmic portion of the chain corresponds to 1219–1236; it reads KLLFALVISLPALFNIGA. The chain crosses the membrane as a helical span at residues 1237-1258; it reads LLMLVMFIYTIIGMSSFGQIKL. The Extracellular portion of the chain corresponds to 1259-1270; the sequence is SGALNDQVNFQT. Positions 1271–1293 form an intramembrane region, pore-forming; that stretch reads FGKTFLLLVRLATSAGWNDILGP. At 1294–1323 the chain is on the extracellular side; it reads LLIQPPNCDPNYITTSTGEKIKVVNGDCGM. A helical membrane pass occupies residues 1324-1346; sequence PWLAISYMVSYIIIVFMIVFNMY. The Cytoplasmic segment spans residues 1347–1522; the sequence is IAVILENFNQ…FIISAPETAV (176 aa).

This sequence belongs to the sodium channel (TC 1.A.1.10) family.

Its subcellular location is the cell membrane. Functionally, mediates the voltage-dependent sodium ion permeability of excitable membranes. Assuming opened or closed conformations in response to the voltage difference across the membrane, the protein forms a sodium-selective channel through which Na(+) ions may pass in accordance with their electrochemical gradient. This is Sodium channel protein 1 brain from Heterololigo bleekeri (Spear squid).